The chain runs to 483 residues: Isocitrate dehydrogenase [NADP] (483 aa).

Threonine 74 serves as a coordination point for NADP(+). D-threo-isocitrate is bound by residues serine 83, asparagine 85, arginine 89, arginine 99, and arginine 121. Position 232 (aspartate 232) interacts with Mg(2+). NADP(+)-binding positions include 264 to 270 (HGSAPDI) and asparagine 277.

The protein belongs to the isocitrate and isopropylmalate dehydrogenases family. As to quaternary structure, homodimer. The cofactor is Mg(2+). Requires Mn(2+) as cofactor.

The catalysed reaction is D-threo-isocitrate + NADP(+) = 2-oxoglutarate + CO2 + NADPH. In terms of biological role, catalyzes the oxidative decarboxylation of isocitrate to 2-oxoglutarate and carbon dioxide with the concomitant reduction of NADP(+). In Rickettsia prowazekii (strain Madrid E), this protein is Isocitrate dehydrogenase [NADP] (icd).